The following is a 153-amino-acid chain: Ribosomal RNA large subunit methyltransferase H (153 aa).

Residues L70, G102, and 121-126 (LSSMTF) each bind S-adenosyl-L-methionine.

This sequence belongs to the RNA methyltransferase RlmH family. As to quaternary structure, homodimer.

It is found in the cytoplasm. It catalyses the reaction pseudouridine(1915) in 23S rRNA + S-adenosyl-L-methionine = N(3)-methylpseudouridine(1915) in 23S rRNA + S-adenosyl-L-homocysteine + H(+). Its function is as follows. Specifically methylates the pseudouridine at position 1915 (m3Psi1915) in 23S rRNA. The protein is Ribosomal RNA large subunit methyltransferase H of Dictyoglomus thermophilum (strain ATCC 35947 / DSM 3960 / H-6-12).